The following is a 506-amino-acid chain: ATP synthase subunit alpha (506 aa).

170-177 (GDRQTGKT) contributes to the ATP binding site.

Belongs to the ATPase alpha/beta chains family. F-type ATPases have 2 components, CF(1) - the catalytic core - and CF(0) - the membrane proton channel. CF(1) has five subunits: alpha(3), beta(3), gamma(1), delta(1), epsilon(1). CF(0) has four main subunits: a(1), b(1), b'(1) and c(9-12).

The protein resides in the cellular thylakoid membrane. It catalyses the reaction ATP + H2O + 4 H(+)(in) = ADP + phosphate + 5 H(+)(out). Functionally, produces ATP from ADP in the presence of a proton gradient across the membrane. The alpha chain is a regulatory subunit. This is ATP synthase subunit alpha from Synechococcus sp. (strain CC9311).